We begin with the raw amino-acid sequence, 247 residues long: MRITQFLASKLKNFSNLPKEYIERSKKQVYWQTPREKNYLPRTVERKRFRYTTNRPWTGQFRQQNMPATMRRKVLIEPVEDWSFFRGDRIEVLVGKDKGKQGIVTQVIPERNWVIVEGLNWHYRRVGAEKEFPGIIIKSEAPLHVLNDIRLVDPSDLLGTEFEWRFTEEGEKVRVSMRSGRIIPIPETNNQTHDYKTPNAYIEREKDTPAAVVGEITFQPKLSTFEMDIMEEMGIKEERTPAKSYWY.

The region spanning 84–117 (FFRGDRIEVLVGKDKGKQGIVTQVIPERNWVIVE) is the KOW domain.

This sequence belongs to the universal ribosomal protein uL24 family. In terms of assembly, component of the mitochondrial ribosome large subunit (39S) which comprises a 16S rRNA and about 50 distinct proteins.

The protein resides in the mitochondrion. The sequence is that of Large ribosomal subunit protein uL24m (mRpL24) from Drosophila pseudoobscura pseudoobscura (Fruit fly).